Reading from the N-terminus, the 384-residue chain is Dual-specificity RNA methyltransferase RlmN (384 aa).

Glutamate 105 acts as the Proton acceptor in catalysis. The region spanning glutamate 111 to aspartate 350 is the Radical SAM core domain. The cysteines at positions 118 and 355 are disulfide-linked. [4Fe-4S] cluster-binding residues include cysteine 125, cysteine 129, and cysteine 132. Residues glycine 179 to glutamate 180, serine 211, serine 233 to histidine 235, and asparagine 312 contribute to the S-adenosyl-L-methionine site. Residue cysteine 355 is the S-methylcysteine intermediate of the active site.

The protein belongs to the radical SAM superfamily. RlmN family. Requires [4Fe-4S] cluster as cofactor.

The protein resides in the cytoplasm. The catalysed reaction is adenosine(2503) in 23S rRNA + 2 reduced [2Fe-2S]-[ferredoxin] + 2 S-adenosyl-L-methionine = 2-methyladenosine(2503) in 23S rRNA + 5'-deoxyadenosine + L-methionine + 2 oxidized [2Fe-2S]-[ferredoxin] + S-adenosyl-L-homocysteine. The enzyme catalyses adenosine(37) in tRNA + 2 reduced [2Fe-2S]-[ferredoxin] + 2 S-adenosyl-L-methionine = 2-methyladenosine(37) in tRNA + 5'-deoxyadenosine + L-methionine + 2 oxidized [2Fe-2S]-[ferredoxin] + S-adenosyl-L-homocysteine. In terms of biological role, specifically methylates position 2 of adenine 2503 in 23S rRNA and position 2 of adenine 37 in tRNAs. m2A2503 modification seems to play a crucial role in the proofreading step occurring at the peptidyl transferase center and thus would serve to optimize ribosomal fidelity. The chain is Dual-specificity RNA methyltransferase RlmN from Escherichia coli O17:K52:H18 (strain UMN026 / ExPEC).